The following is a 445-amino-acid chain: ATP synthase subunit b-delta (445 aa).

The interval 1–168 is ATP synthase subunit b; the sequence is MSIFIGQLIG…PSSVVIDTAA (168 aa). The chain crosses the membrane as a helical span at residues 3–23; sequence IFIGQLIGFAVIAFIIVKWVV. The segment at 169–445 is ATP synthase subunit delta; sequence TSRLRAASRQ…LAAAQTGLPD (277 aa).

The protein in the N-terminal section; belongs to the ATPase B chain family. This sequence in the C-terminal section; belongs to the ATPase delta chain family. As to quaternary structure, F-type ATPases have 2 components, F(1) - the catalytic core - and F(0) - the membrane proton channel. F(1) has five subunits: alpha(3), beta(3), gamma(1), delta(1), epsilon(1). F(0) has three main subunits: a(1), b(2) and c(10-14). The alpha and beta chains form an alternating ring which encloses part of the gamma chain. F(1) is attached to F(0) by a central stalk formed by the gamma and epsilon chains, while a peripheral stalk is formed by the delta and b chains.

It is found in the cell membrane. Functionally, f(1)F(0) ATP synthase produces ATP from ADP in the presence of a proton or sodium gradient. F-type ATPases consist of two structural domains, F(1) containing the extramembraneous catalytic core and F(0) containing the membrane proton channel, linked together by a central stalk and a peripheral stalk. During catalysis, ATP synthesis in the catalytic domain of F(1) is coupled via a rotary mechanism of the central stalk subunits to proton translocation. In terms of biological role, this fusion protein includes a component of the F(0) channel (subunit b) and of the F(1) subunit (subunit delta). Two copies of subunit b and one of delta together form the peripheral 'stator' stalk which links F(1) to F(0). The protein is ATP synthase subunit b-delta (atpFH) of Mycolicibacterium smegmatis (strain ATCC 700084 / mc(2)155) (Mycobacterium smegmatis).